The following is an 89-amino-acid chain: Translation initiation factor IF-1, chloroplastic (89 aa).

In terms of domain architecture, S1-like spans 1-73; sequence MKEKEAKWVV…TKGRIIYRLP (73 aa).

Belongs to the IF-1 family. Component of the 30S ribosomal translation pre-initiation complex which assembles on the 30S ribosome in the order IF-2 and IF-3, IF-1 and N-formylmethionyl-tRNA(fMet); mRNA recruitment can occur at any time during PIC assembly.

Its subcellular location is the plastid. It localises to the chloroplast. Its function is as follows. One of the essential components for the initiation of protein synthesis. Stabilizes the binding of IF-2 and IF-3 on the 30S subunit to which N-formylmethionyl-tRNA(fMet) subsequently binds. Helps modulate mRNA selection, yielding the 30S pre-initiation complex (PIC). Upon addition of the 50S ribosomal subunit IF-1, IF-2 and IF-3 are released leaving the mature 70S translation initiation complex. This Jasminum nudiflorum (Winter jasmine) protein is Translation initiation factor IF-1, chloroplastic.